A 147-amino-acid polypeptide reads, in one-letter code: Small ribosomal subunit protein bS16 (147 aa).

Residues 81–147 (QKFTGDTSPS…GDNSGEKAEA (67 aa)) are disordered. Composition is skewed to basic and acidic residues over residues 95–104 (QPERPNKDDL) and 114–125 (EAPREAITKKSE). The span at 126–140 (GAAADEASESAAGDN) shows a compositional bias: low complexity.

Belongs to the bacterial ribosomal protein bS16 family.

The polypeptide is Small ribosomal subunit protein bS16 (Cutibacterium acnes (strain DSM 16379 / KPA171202) (Propionibacterium acnes)).